The primary structure comprises 405 residues: Tryptophan synthase beta chain (405 aa).

Lys98 is modified (N6-(pyridoxal phosphate)lysine).

The protein belongs to the TrpB family. As to quaternary structure, tetramer of two alpha and two beta chains. Requires pyridoxal 5'-phosphate as cofactor.

The catalysed reaction is (1S,2R)-1-C-(indol-3-yl)glycerol 3-phosphate + L-serine = D-glyceraldehyde 3-phosphate + L-tryptophan + H2O. It participates in amino-acid biosynthesis; L-tryptophan biosynthesis; L-tryptophan from chorismate: step 5/5. The beta subunit is responsible for the synthesis of L-tryptophan from indole and L-serine. The polypeptide is Tryptophan synthase beta chain (Xanthomonas campestris pv. campestris (strain 8004)).